The primary structure comprises 734 residues: Threonine--tRNA ligase, cytoplasmic (734 aa).

The segment at 1 to 41 (MSASEAGVTEQVKKLSVKDSSNDAVKPNKKENKKSKQQSLY) is disordered. Basic and acidic residues predominate over residues 11–30 (QVKKLSVKDSSNDAVKPNKK). Residues 69–135 (SMPRVPLKIV…EGEANEEIKL (67 aa)) form the TGS domain. 2 positions are modified to phosphoserine: Ser195 and Ser289. Phosphothreonine is present on residues Thr297 and Thr381. Phosphoserine is present on residues Ser453 and Ser457. Thr460 bears the Phosphothreonine mark. Ser605 carries the phosphoserine modification.

This sequence belongs to the class-II aminoacyl-tRNA synthetase family.

The protein localises to the cytoplasm. It catalyses the reaction tRNA(Thr) + L-threonine + ATP = L-threonyl-tRNA(Thr) + AMP + diphosphate + H(+). This Saccharomyces cerevisiae (strain ATCC 204508 / S288c) (Baker's yeast) protein is Threonine--tRNA ligase, cytoplasmic (THS1).